We begin with the raw amino-acid sequence, 85 residues long: Small ribosomal subunit protein uS17 (85 aa).

This sequence belongs to the universal ribosomal protein uS17 family. In terms of assembly, part of the 30S ribosomal subunit.

In terms of biological role, one of the primary rRNA binding proteins, it binds specifically to the 5'-end of 16S ribosomal RNA. The chain is Small ribosomal subunit protein uS17 from Syntrophus aciditrophicus (strain SB).